We begin with the raw amino-acid sequence, 131 residues long: Large ribosomal subunit protein bL17 (131 aa).

Belongs to the bacterial ribosomal protein bL17 family. In terms of assembly, part of the 50S ribosomal subunit. Contacts protein L32.

In Shewanella frigidimarina (strain NCIMB 400), this protein is Large ribosomal subunit protein bL17.